Here is a 514-residue protein sequence, read N- to C-terminus: Ribonuclease Y (514 aa).

Residues 2-22 (EDLIVAIVVGAFSSAISIFVV) form a helical membrane-spanning segment. Residues 204–268 (LINNIPLNDE…VATKTIRELL (65 aa)) form the KH domain. Positions 330 to 423 (ALAHTLEVAH…VCAADALSAA (94 aa)) constitute an HD domain.

The protein belongs to the RNase Y family.

It is found in the cell membrane. Functionally, endoribonuclease that initiates mRNA decay. This Aliarcobacter butzleri (strain RM4018) (Arcobacter butzleri) protein is Ribonuclease Y.